A 148-amino-acid chain; its full sequence is MSRRLARETALQVLFQLEMTGESQDLKSAIHKWADEFAVPEGSIPFAEELAEGTLTHKEVIDENLEKLSEGWSLARMANVDRNLLRLASYEILFRKDIPGRVTINEAIEIAKRYGSEESGKFINGILDKVVESVNKKDEKGNDTLSRD.

The protein belongs to the NusB family.

In terms of biological role, involved in transcription antitermination. Required for transcription of ribosomal RNA (rRNA) genes. Binds specifically to the boxA antiterminator sequence of the ribosomal RNA (rrn) operons. The polypeptide is Transcription antitermination protein NusB (Desulfitobacterium hafniense (strain DSM 10664 / DCB-2)).